The chain runs to 336 residues: MTEISEICETAFKLTYHPIYRGSLFIHLFVSISSIIPLIYFVIFKLPKTSFHGNLKFLFSAYFVSVFLFSVDFAIISTTEILIPLFSKHPCNLLIPDQYLKIGNTTVSIFMSLSTFFPISITIERFIAMKMARTYEKTRVRLGPILTGCNILLDLLIVFFIYRDEKFDDGSISFVFFPKTLAPKMFTFFWVMFFLNLINFTFNSYLLRQSIRLKVSTSSLATKYQREEVVHSTKFAVFVVFCHVILFGFYVIGIMILRYFGSIFIPDPADLMATRGAFTTMISLYNLVVGSVAVYLNHLIKTRKSEEITGTVRIQATGAVGAQNYENAIFNIWNSV.

A run of 7 helical transmembrane segments spans residues 24-44 (LFIHLFVSISSIIPLIYFVIF), 57-77 (FLFSAYFVSVFLFSVDFAIIS), 109-129 (IFMSLSTFFPISITIERFIAM), 142-162 (LGPILTGCNILLDLLIVFFIY), 186-206 (FTFFWVMFFLNLINFTFNSYL), 237-257 (VFVVFCHVILFGFYVIGIMIL), and 276-296 (GAFTTMISLYNLVVGSVAVYL).

The protein belongs to the nematode receptor-like protein srb family.

It is found in the membrane. This Caenorhabditis elegans protein is Serpentine receptor class beta-15 (srb-15).